The following is a 133-amino-acid chain: Fatty acid-binding protein, heart (133 aa).

Position 2 is an N-acetylvaline (V2). The residue at position 8 (T8) is a Phosphothreonine. A Phosphotyrosine; by Tyr-kinases modification is found at Y20. S23 is modified (phosphoserine). Position 30 is a phosphothreonine (T30). S83 is subject to Phosphoserine. 127-129 (RTY) is a binding site for (9Z)-octadecenoate. Residue 127–129 (RTY) coordinates hexadecanoate. Residue 127–129 (RTY) participates in octadecanoate binding.

This sequence belongs to the calycin superfamily. Fatty-acid binding protein (FABP) family.

It is found in the cytoplasm. FABPs are thought to play a role in the intracellular transport of long-chain fatty acids and their acyl-CoA esters. This chain is Fatty acid-binding protein, heart (FABP3), found in Bos mutus grunniens (Wild yak).